Here is a 188-residue protein sequence, read N- to C-terminus: UPF0157 protein VC_A0354 (188 aa).

Belongs to the UPF0157 (GrpB) family.

In Vibrio cholerae serotype O1 (strain ATCC 39315 / El Tor Inaba N16961), this protein is UPF0157 protein VC_A0354.